The chain runs to 429 residues: Fumarylacetoacetase (429 aa).

Position 139 (D139) interacts with Ca(2+). Residue H146 is the Proton acceptor of the active site. Residue R155 coordinates substrate. 3 residues coordinate Ca(2+): E212, E214, and D246. D246 is a Mg(2+) binding site. Q253 contacts substrate. Residues K266 and T270 each contribute to the Mg(2+) site. T363 is a binding site for substrate.

Belongs to the FAH family. The cofactor is Ca(2+). Requires Mg(2+) as cofactor.

The enzyme catalyses 4-fumarylacetoacetate + H2O = acetoacetate + fumarate + H(+). The protein operates within amino-acid degradation; L-phenylalanine degradation; acetoacetate and fumarate from L-phenylalanine: step 6/6. Converts fumarylacetoacetate to acetoacetate and fumarate. Involved in tyrosine catabolic pathway. Catalyzes the final step in the tyrosine degradation pathway. This chain is Fumarylacetoacetase, found in Oryza sativa subsp. japonica (Rice).